We begin with the raw amino-acid sequence, 397 residues long: 1-deoxy-D-xylulose 5-phosphate reductoisomerase (397 aa).

Positions 10, 11, 12, 13, 38, and 123 each coordinate NADPH. Position 124 (Lys124) interacts with 1-deoxy-D-xylulose 5-phosphate. Glu125 provides a ligand contact to NADPH. Asp149 provides a ligand contact to Mn(2+). Residues Ser150, Glu151, Ser185, and His208 each coordinate 1-deoxy-D-xylulose 5-phosphate. Position 151 (Glu151) interacts with Mn(2+). Gly214 contacts NADPH. 1-deoxy-D-xylulose 5-phosphate is bound by residues Ser221, Asn226, Lys227, and Glu230. Glu230 provides a ligand contact to Mn(2+).

The protein belongs to the DXR family. Requires Mg(2+) as cofactor. The cofactor is Mn(2+).

The catalysed reaction is 2-C-methyl-D-erythritol 4-phosphate + NADP(+) = 1-deoxy-D-xylulose 5-phosphate + NADPH + H(+). It participates in isoprenoid biosynthesis; isopentenyl diphosphate biosynthesis via DXP pathway; isopentenyl diphosphate from 1-deoxy-D-xylulose 5-phosphate: step 1/6. Its function is as follows. Catalyzes the NADPH-dependent rearrangement and reduction of 1-deoxy-D-xylulose-5-phosphate (DXP) to 2-C-methyl-D-erythritol 4-phosphate (MEP). The chain is 1-deoxy-D-xylulose 5-phosphate reductoisomerase from Idiomarina loihiensis (strain ATCC BAA-735 / DSM 15497 / L2-TR).